Consider the following 580-residue polypeptide: NADH-quinone oxidoreductase subunit C/D (580 aa).

The segment at 1–171 (MSFDQVIADA…PPFVLTDRLF (171 aa)) is NADH dehydrogenase I subunit C. Residues 195 to 580 (ELMVLNFGPH…IDFVMSDVDR (386 aa)) form an NADH dehydrogenase I subunit D region.

It in the N-terminal section; belongs to the complex I 30 kDa subunit family. The protein in the C-terminal section; belongs to the complex I 49 kDa subunit family. In terms of assembly, NDH-1 is composed of 13 different subunits. Subunits NuoB, CD, E, F, and G constitute the peripheral sector of the complex.

It localises to the cell inner membrane. The catalysed reaction is a quinone + NADH + 5 H(+)(in) = a quinol + NAD(+) + 4 H(+)(out). NDH-1 shuttles electrons from NADH, via FMN and iron-sulfur (Fe-S) centers, to quinones in the respiratory chain. The immediate electron acceptor for the enzyme in this species is believed to be ubiquinone. Couples the redox reaction to proton translocation (for every two electrons transferred, four hydrogen ions are translocated across the cytoplasmic membrane), and thus conserves the redox energy in a proton gradient. This Cereibacter sphaeroides (strain ATCC 17025 / ATH 2.4.3) (Rhodobacter sphaeroides) protein is NADH-quinone oxidoreductase subunit C/D.